The following is a 233-amino-acid chain: Probable histidinol-phosphatase (233 aa).

Belongs to the PHP hydrolase family. HisK subfamily.

It catalyses the reaction L-histidinol phosphate + H2O = L-histidinol + phosphate. The protein operates within amino-acid biosynthesis; L-histidine biosynthesis; L-histidine from 5-phospho-alpha-D-ribose 1-diphosphate: step 8/9. The protein is Probable histidinol-phosphatase (hisK) of Thermotoga maritima (strain ATCC 43589 / DSM 3109 / JCM 10099 / NBRC 100826 / MSB8).